A 439-amino-acid chain; its full sequence is Probable aspartic proteinase GIP2 (439 aa).

An N-terminal signal peptide occupies residues 1–23 (MASSCCLHAILLCSLLFITSTTA). One can recognise a Peptidase A1 domain in the interval 47 to 420 (YLTQIQQRTP…DLARSRLGFT (374 aa)). Residues Asn116, Asn280, Asn323, and Asn434 are each glycosylated (N-linked (GlcNAc...) asparagine).

It belongs to the peptidase A1 family. As to quaternary structure, interacts with the Phytophtora parasitica xyloglucanase XEG1 and xyloglucanase-like XLP1. Possesses stronger binding affinity with XLP1, a truncated paralog of P.parasitica XEG1 which has no enzyme activity.

Its subcellular location is the secreted. It is found in the extracellular space. The protein localises to the apoplast. Functionally, involved in plant defense against Phytophtora parasitica. Contributes positively to Nicotiana resistance against P.parasitica. Binds the P.parasitica xyloglucanase XEG1 and inhibits its cell wall degrading enzyme activity and its contribution as P.parasitica virulence factor. XEG1 acts as an important virulence factor during P.parasitica infection but also acts as a pathogen-associated molecular pattern (PAMP) in Nictotiana species, where it can trigger defense responses including cell death. Its function is as follows. (Microbial infection) Possesses stronger binding affinity with XLP1, a truncated paralog of P.parasitica XEG1 which has no enzyme activity. Is impaired in its inhibitor activity towards the P.parasitica xyloglucanase XEG1 when hijacked by XLP1 binding. The protein is Probable aspartic proteinase GIP2 of Nicotiana benthamiana.